The following is a 291-amino-acid chain: 4-hydroxy-tetrahydrodipicolinate synthase (291 aa).

Thr-45 provides a ligand contact to pyruvate. Tyr-133 functions as the Proton donor/acceptor in the catalytic mechanism. Lys-161 serves as the catalytic Schiff-base intermediate with substrate. Residue Ile-203 participates in pyruvate binding.

It belongs to the DapA family. In terms of assembly, homotetramer; dimer of dimers.

Its subcellular location is the cytoplasm. The enzyme catalyses L-aspartate 4-semialdehyde + pyruvate = (2S,4S)-4-hydroxy-2,3,4,5-tetrahydrodipicolinate + H2O + H(+). It participates in amino-acid biosynthesis; L-lysine biosynthesis via DAP pathway; (S)-tetrahydrodipicolinate from L-aspartate: step 3/4. Its function is as follows. Catalyzes the condensation of (S)-aspartate-beta-semialdehyde [(S)-ASA] and pyruvate to 4-hydroxy-tetrahydrodipicolinate (HTPA). This is 4-hydroxy-tetrahydrodipicolinate synthase from Neisseria meningitidis serogroup C / serotype 2a (strain ATCC 700532 / DSM 15464 / FAM18).